Consider the following 809-residue polypeptide: Spindle pole body component alp14 (809 aa).

2 HEAT repeats span residues 127-164 and 167-204; these read DSAAPVIESIIPSLSARSPKVIASNVAAIASLVEQFGA and IPSKMIIPHISNLFGHADKNVRKEASRLTVNIYRWTGD. Disordered regions lie at residues 233–274, 507–608, and 619–638; these read PPKQ…SDDQ, AKAP…SGAL, and ELDDPAPQPAKHSRVDRYEH. Over residues 239–253 the composition is skewed to polar residues; sequence FLKSQQPTSEPNVET. Acidic residues predominate over residues 262–274; it reads ENEESEPEPSDDQ. A compositionally biased stretch (basic residues) spans 509 to 518; that stretch reads APTKKSKVKP. Low complexity-rich tracts occupy residues 526 to 551 and 582 to 595; these read VVVPSNAKAVKKSVVPSSPVVPSPRK and SRGLSRGTSSSLQQ. 2 positions are modified to phosphoserine: Ser543 and Ser548. A compositionally biased stretch (polar residues) spans 597 to 608; that stretch reads VKASTPLNSGAL. Positions 637 to 697 form a coiled coil; sequence EHPKVLEDND…NTLRSARKAS (61 aa). Ser697 and Ser720 each carry phosphoserine.

It belongs to the TOG/XMAP215 family. As to quaternary structure, interacts with alp14.

It localises to the cytoplasm. It is found in the cytoskeleton. The protein resides in the microtubule organizing center. The protein localises to the spindle pole body. Its subcellular location is the chromosome. It localises to the centromere. It is found in the kinetochore. Its function is as follows. Required for bipolar spindle formation and proper chromosome segregation. Has a role in connecting the kinetochores and the plus end of pole to chromosome microtubules. Also required for the activation of the spindle checkpoint pathway. This is Spindle pole body component alp14 (alp14) from Schizosaccharomyces pombe (strain 972 / ATCC 24843) (Fission yeast).